Here is a 399-residue protein sequence, read N- to C-terminus: Acetate kinase (399 aa).

Position 7 (Asn-7) interacts with Mg(2+). ATP is bound at residue Lys-14. Arg-90 is a binding site for substrate. The active-site Proton donor/acceptor is Asp-147. Residues 207–211, 282–284, and 330–334 contribute to the ATP site; these read HLGNG, DFR, and GIGEN. Glu-385 contributes to the Mg(2+) binding site.

This sequence belongs to the acetokinase family. Homodimer. It depends on Mg(2+) as a cofactor. The cofactor is Mn(2+).

The protein localises to the cytoplasm. The enzyme catalyses acetate + ATP = acetyl phosphate + ADP. The protein operates within metabolic intermediate biosynthesis; acetyl-CoA biosynthesis; acetyl-CoA from acetate: step 1/2. Its function is as follows. Catalyzes the formation of acetyl phosphate from acetate and ATP. Can also catalyze the reverse reaction. The protein is Acetate kinase of Caldicellulosiruptor bescii (strain ATCC BAA-1888 / DSM 6725 / KCTC 15123 / Z-1320) (Anaerocellum thermophilum).